Here is a 213-residue protein sequence, read N- to C-terminus: UPF0301 protein RPC_0788 (213 aa).

Positions methionine 1–serine 20 are disordered.

This sequence belongs to the UPF0301 (AlgH) family.

In Rhodopseudomonas palustris (strain BisB18), this protein is UPF0301 protein RPC_0788.